Here is a 419-residue protein sequence, read N- to C-terminus: D-mannonate dehydratase (419 aa).

Substrate contacts are provided by N54 and H139. Y176 (proton donor/acceptor) is an active-site residue. D227 contacts Mg(2+). Catalysis depends on H229, which acts as the Proton donor/acceptor. Residues E253 and E279 each contribute to the Mg(2+) site. Substrate is bound by residues E279, R300, H329, D333, and E356.

This sequence belongs to the mandelate racemase/muconate lactonizing enzyme family. GalD subfamily. It depends on Mg(2+) as a cofactor.

It carries out the reaction D-mannonate = 2-dehydro-3-deoxy-D-gluconate + H2O. Its pathway is carbohydrate metabolism; pentose and glucuronate interconversion. Catalyzes the dehydration of D-mannonate. Has no detectable activity with a panel of 70 other acid sugars (in vitro). This is D-mannonate dehydratase from Xanthomonas oryzae pv. oryzicola (strain BLS256).